The primary structure comprises 151 residues: 3-hydroxyacyl-[acyl-carrier-protein] dehydratase FabZ (151 aa).

Residue His-57 is part of the active site.

Belongs to the thioester dehydratase family. FabZ subfamily.

The protein localises to the cytoplasm. It carries out the reaction a (3R)-hydroxyacyl-[ACP] = a (2E)-enoyl-[ACP] + H2O. Involved in unsaturated fatty acids biosynthesis. Catalyzes the dehydration of short chain beta-hydroxyacyl-ACPs and long chain saturated and unsaturated beta-hydroxyacyl-ACPs. This is 3-hydroxyacyl-[acyl-carrier-protein] dehydratase FabZ from Prochlorococcus marinus (strain SARG / CCMP1375 / SS120).